The sequence spans 361 residues: MTTYFNYPSKELQDELREIAQKIVAPGKGILAADESGPTMGKRLQDIGVENTEDNRRAYRQLLFSTDPKLAENISGVILFHETLYQKADDGTPFAEILKKKGIILGIKVDKGVVPLFGSEDEVTTQGLDDLAARCAQYKKDGCDFAKWRCVLKIGKNTPSYQSILENANVLARYASICQSQRIVPIVEPEVLPDGDHDLDRAQKVTETVLAAVYKALSDHHVYLEGTLLKPNMVTAGQSAKKNTPEEIALATVQALRRTVPAAVTGVTFLSGGQSEEEATVNLSAINNVPLIRPWALTFSYGRALQASVLRAWAGKKENIAAGQNELLKRAKANGDAAQGKYVAGSAGAGSGSLFVANHAY.

An N-acetylthreonine modification is found at Thr-2. Substrate contacts are provided by Arg-56 and Lys-147. Glu-188 (proton acceptor) is an active-site residue. Residue Lys-230 is the Schiff-base intermediate with dihydroxyacetone-P of the active site.

The protein belongs to the class I fructose-bisphosphate aldolase family. As to quaternary structure, homotetramer. As to expression, mainly expressed in the heads and partly in the thoraxes of adult flies. Expressed in all adult tissues. The Alpha-beta mRNA shows strong expression in the abdomens of adults. In terms of tissue distribution, mainly expressed in adult abdominal regions and is also expressed in lesser amounts in other parts of the body. The Beta-gamma mRNA is expressed in adult heads.

The enzyme catalyses beta-D-fructose 1,6-bisphosphate = D-glyceraldehyde 3-phosphate + dihydroxyacetone phosphate. Its pathway is carbohydrate degradation; glycolysis; D-glyceraldehyde 3-phosphate and glycerone phosphate from D-glucose: step 4/4. Functionally, enzyme of the glycolytic pathway. Glycolysis is essential in glial cells but not in neurons; neurons rely on the citric acid cycle for their energy needs, and on lactate and alanine secreted into the hemolymph by glial cells to fuel it. May take part in developmental stage-specific or tissue -specific sugar-phosphate metabolisms. Protein acts on two substrates fructose 1,6-bisphosphate and fructose 1-phosphate (like other class I aldolases). The polypeptide is Fructose-bisphosphate aldolase (Drosophila melanogaster (Fruit fly)).